The sequence spans 307 residues: MKSQWHGTCDLRLFKSSRSNNKDVVKTIHQAKCTAPLKVMRVFNDKKDGRCEIPILHSAGGIVGGDQLTINVNAEEDSIAICSSVAAQKVYGSRGRSKLNPQGSWANQKCFFQIKKNSDFEWIPQELIVYQGGLFEQNMTVNLDLSSSFLCVDLVRLGRTAAEEQLGNGVWRSSLEIFRDNNQGKHYEFSDRLELSGEALKSIHGLEQKPVFGSLTWITPKKIKQKDLSDLLVECREQRAGLEGFMTCSLLENGISARYTGSSTQSARFWFYRIWSLTRILRKLSMPEYMRIWPMQENPSRDKKCPS.

This sequence belongs to the UreD family. As to quaternary structure, ureD, UreF and UreG form a complex that acts as a GTP-hydrolysis-dependent molecular chaperone, activating the urease apoprotein by helping to assemble the nickel containing metallocenter of UreC. The UreE protein probably delivers the nickel.

The protein localises to the cytoplasm. Required for maturation of urease via the functional incorporation of the urease nickel metallocenter. This Prochlorococcus marinus (strain NATL1A) protein is Urease accessory protein UreD.